Consider the following 216-residue polypeptide: Dimethylamine corrinoid protein 1 (216 aa).

In terms of domain architecture, B12-binding N-terminal spans 1 to 91 (MTSKEELLQE…DMPAGTETKK (91 aa)). Residues 92–216 (LGVIVNGTVE…AKAKELLVGK (125 aa)) form the B12-binding domain. Histidine 105 contacts methylcob(III)alamin.

Belongs to the methylamine corrinoid protein family.

It functions in the pathway one-carbon metabolism; methanogenesis from dimethylamine. Acts as a methyl group carrier between MtbB and MtbA. The polypeptide is Dimethylamine corrinoid protein 1 (mtbC1) (Methanosarcina mazei (strain ATCC BAA-159 / DSM 3647 / Goe1 / Go1 / JCM 11833 / OCM 88) (Methanosarcina frisia)).